Reading from the N-terminus, the 321-residue chain is tRNA pseudouridine synthase B (321 aa).

Asp-47 (nucleophile) is an active-site residue.

The protein belongs to the pseudouridine synthase TruB family. Type 1 subfamily.

The enzyme catalyses uridine(55) in tRNA = pseudouridine(55) in tRNA. Responsible for synthesis of pseudouridine from uracil-55 in the psi GC loop of transfer RNAs. This Shewanella baltica (strain OS185) protein is tRNA pseudouridine synthase B.